Reading from the N-terminus, the 1499-residue chain is B-cell CLL/lymphoma 9-like protein (1499 aa).

Disordered stretches follow at residues 1 to 238 and 271 to 500; these read MRIL…PPSQ and VPRA…MGQQ. The segment covering 20–37 has biased composition (pro residues); it reads GSPPLSPRGHCPPAPAKP. Ser21 and Ser25 each carry phosphoserine. Lys36 is modified (N6-acetyllysine). Polar residues-rich tracts occupy residues 45-70 and 85-96; these read TNHGKTGNGGAQSQHQNVNQGPTCNV and NQISPSNSSLKN. Ser88 is modified (phosphoserine). Residues Lys108 and Lys110 each carry the N6-acetyllysine modification. 2 stretches are compositionally biased toward basic and acidic residues: residues 114-126 and 134-153; these read DRSVSVDSGEQRE and SEAKEVAPRSKRRCVLERKQ. Residues Ser116 and Ser118 each carry the phosphoserine modification. An N6-acetyllysine modification is found at Lys137. Residues 193 to 205 show a composition bias toward polar residues; sequence PGQTTQLPLSESS. Gly residues predominate over residues 222 to 232; that stretch reads PGGGGGGGGVP. Pro residues-rich tracts occupy residues 281–291 and 301–325; these read KVPPTPEPLPL and SQPPPLPPPPPPAPGSAPPALPPEG. The interval 304–533 is necessary for interaction with CTNNB1; it reads PPLPPPPPPA…QEEYYEEKRR (230 aa). Low complexity-rich tracts occupy residues 351-363 and 370-387; these read THPNTPTATTANN and DPSSAPGPALLGEAAAPG. A compositionally biased stretch (basic and acidic residues) spans 399–421; that stretch reads LSKEQLEHRERSLQTLRDIERLL. The residue at position 424 (Ser424) is a Phosphoserine. Positions 445 to 458 are enriched in pro residues; sequence AQAPPPPQQPPTAP. At Thr514 the chain carries Phosphothreonine. Position 680 is an asymmetric dimethylarginine (Arg680). Ser750, Ser813, Ser915, Ser926, Ser938, Ser942, Ser947, Ser975, Ser987, Ser991, Ser997, Ser1004, Ser1010, and Ser1017 each carry phosphoserine. Disordered stretches follow at residues 888–1084 and 1116–1201; these read SHMP…QNPL and ELLP…PQNS. The segment covering 935-960 has biased composition (polar residues); the sequence is PTLSQVHSPLVTSPSANLKSPQTPSQ. Polar residues predominate over residues 978-996; the sequence is VLGSSLSVRSPTGSPSRLK. 2 stretches are compositionally biased toward polar residues: residues 1019–1041 and 1069–1084; these read GVSQNKQPPLNMNSSTTLSNMEQ and LPFTSSPDPTPSQNPL. 2 stretches are compositionally biased toward pro residues: residues 1122–1132 and 1168–1179; these read PLLPPPPPPQG and HEPPPAMLPSPT. Lys1344 is covalently cross-linked (Glycyl lysine isopeptide (Lys-Gly) (interchain with G-Cter in SUMO2)).

Belongs to the BCL9 family. Found in a complex with CDC73; CTNNB1 and PYGO1. Interacts with CTNNB1. In terms of tissue distribution, expressed in breast, ductal and invasive ductal carcinomas of the breast, sporadic colorectal adenomas and carcinomas (at protein level). Expressed in fetal brain. Expressed in lung, amygdala, eye, prostate, pancreatic and prostate cancers, head and neck tumors and embryonal tumor.

The protein resides in the nucleus. Transcriptional regulator that acts as an activator. Promotes beta-catenin transcriptional activity. Plays a role in tumorigenesis. Enhances the neoplastic transforming activity of CTNNB1. The polypeptide is B-cell CLL/lymphoma 9-like protein (BCL9L) (Homo sapiens (Human)).